A 305-amino-acid chain; its full sequence is Homoserine O-acetyltransferase (305 aa).

Cys-142 serves as the catalytic Acyl-thioester intermediate. Positions 163 and 192 each coordinate substrate. His-235 serves as the catalytic Proton acceptor. Glu-237 is an active-site residue. Arg-249 lines the substrate pocket.

Belongs to the MetA family.

It is found in the cytoplasm. The catalysed reaction is L-homoserine + acetyl-CoA = O-acetyl-L-homoserine + CoA. The protein operates within amino-acid biosynthesis; L-methionine biosynthesis via de novo pathway; O-acetyl-L-homoserine from L-homoserine: step 1/1. Its function is as follows. Transfers an acetyl group from acetyl-CoA to L-homoserine, forming acetyl-L-homoserine. The sequence is that of Homoserine O-acetyltransferase from Cereibacter sphaeroides (strain KD131 / KCTC 12085) (Rhodobacter sphaeroides).